A 756-amino-acid chain; its full sequence is MTTSHILGFPRVGAKRELKFAQERYWRKELAEQDLLDLAKALREKNWKHQAAANADFVAVGDFTFYDHILDLQVATGAIPARFGFDSQNLTLDQYFQLARGNKDQFAIEMTKWFDTNYHYLVPEFQKSTAFKANPAHYVNQIREAKALGLNFKPVIVGPLTFLWLGKEKGEAFNRFDLLNQLVPVYVEILNALVAEGAEWIQIDEPALALDLPAEWVEAYKSVYAELSKVNAKLLLATYFGSVAEHAELLKALPVAGLHLDLVRAPEQLAAFEDYSKVLSAGVIEGRNIWRANLNKVLDVLEPLKAKLGERLWIAPSCSLLHTPFDLEVEVQLKEKNTALYSWLSFTLQKVEELNVLKQALNNGRASVQAALDASQAAADARATSKEIHRPEVAERLANLPKGADQRKSPFAERIVKQNAWLNLPLLPTTNIGSFPQTTEIRHARASFKKGELSLADYEAAMKKEIEYVVRRQEELDLDVLVHGEAERNDMVEYFGELLDGFAFTKFGWVQSYGSRCVKPPVIYGDVTRPEPMTVRWSQYAQSLTNRVMKGMLTGPVTILQWSFVRNDIPRSTVCKQIGVALSDEVLDLEAAGIKVIQIDEPAIREGLPLKRADWDAYLQWAGEAFRLSSMGVQDDTQIHTHMCYSEFNDILPAIAALDADVITIETSRSDMELLTAFADFKYPNDIGPGVYDIHSPRVPTAAEVEHLLRKALNVIPKERLWVNPDCGLKTRGWTETIDQLKVMVDVTKKLRAELA.

5-methyltetrahydropteroyltri-L-glutamate contacts are provided by residues 16–19 and Lys112; that span reads RELK. L-homocysteine contacts are provided by residues 432-434 and Glu485; that span reads IGS. L-methionine-binding positions include 432 to 434 and Glu485; that span reads IGS. 5-methyltetrahydropteroyltri-L-glutamate is bound by residues 516-517 and Trp562; that span reads RC. Asp600 lines the L-homocysteine pocket. Residue Asp600 coordinates L-methionine. Residue Glu606 participates in 5-methyltetrahydropteroyltri-L-glutamate binding. Residues His642, Cys644, and Glu666 each contribute to the Zn(2+) site. The active-site Proton donor is His695. Cys727 is a binding site for Zn(2+).

The protein belongs to the vitamin-B12 independent methionine synthase family. Requires Zn(2+) as cofactor.

It carries out the reaction 5-methyltetrahydropteroyltri-L-glutamate + L-homocysteine = tetrahydropteroyltri-L-glutamate + L-methionine. The protein operates within amino-acid biosynthesis; L-methionine biosynthesis via de novo pathway; L-methionine from L-homocysteine (MetE route): step 1/1. Its function is as follows. Catalyzes the transfer of a methyl group from 5-methyltetrahydrofolate to homocysteine resulting in methionine formation. This chain is 5-methyltetrahydropteroyltriglutamate--homocysteine methyltransferase, found in Haemophilus influenzae (strain PittEE).